Reading from the N-terminus, the 283-residue chain is Elongation factor Ts (283 aa).

Residues 79–82 (TDFV) are involved in Mg(2+) ion dislocation from EF-Tu.

The protein belongs to the EF-Ts family.

Its subcellular location is the cytoplasm. Functionally, associates with the EF-Tu.GDP complex and induces the exchange of GDP to GTP. It remains bound to the aminoacyl-tRNA.EF-Tu.GTP complex up to the GTP hydrolysis stage on the ribosome. The chain is Elongation factor Ts from Shewanella sp. (strain ANA-3).